Consider the following 198-residue polypeptide: Phosphoheptose isomerase (198 aa).

The region spanning 34-196 is the SIS domain; it reads IVEALIRGNK…DDSLFPADHG (163 aa). 49–51 contributes to the substrate binding site; sequence NGG. Residues His58 and Asn62 each coordinate Zn(2+). Substrate is bound by residues Asn62, 91-92, 117-119, Ser122, and Gln172; these read ND and STS. Zn(2+) contacts are provided by Gln172 and His180.

It belongs to the SIS family. GmhA subfamily. Homotetramer. Requires Zn(2+) as cofactor.

It localises to the cytoplasm. It catalyses the reaction 2 D-sedoheptulose 7-phosphate = D-glycero-alpha-D-manno-heptose 7-phosphate + D-glycero-beta-D-manno-heptose 7-phosphate. It functions in the pathway carbohydrate biosynthesis; D-glycero-D-manno-heptose 7-phosphate biosynthesis; D-glycero-alpha-D-manno-heptose 7-phosphate and D-glycero-beta-D-manno-heptose 7-phosphate from sedoheptulose 7-phosphate: step 1/1. In terms of biological role, catalyzes the isomerization of sedoheptulose 7-phosphate in D-glycero-D-manno-heptose 7-phosphate. In Alteromonas mediterranea (strain DSM 17117 / CIP 110805 / LMG 28347 / Deep ecotype), this protein is Phosphoheptose isomerase.